A 217-amino-acid chain; its full sequence is Secreted RxLR effector protein 147 (217 aa).

Residues 1-23 form the signal peptide; the sequence is MRGAFYVTTALLITNSIRTAAEA. Positions 22 to 52 are disordered; sequence EANPPGRQPMSHHDGVVPGKSSPRRFLQGSH. The RxLR-dEER signature appears at 46 to 67; that stretch reads RFLQGSHEPHDKFAVSAANEER.

The protein belongs to the RxLR effector family.

It localises to the secreted. Its subcellular location is the host nucleus. The protein localises to the host cytoplasm. Functionally, secreted effector that completely suppresses the host cell death induced by cell death-inducing proteins. The chain is Secreted RxLR effector protein 147 from Plasmopara viticola (Downy mildew of grapevine).